A 404-amino-acid polypeptide reads, in one-letter code: Cysteine desulfurase IscS (404 aa).

Residues 75–76 (AT), Asn155, Gln183, and 203–205 (SGH) each bind pyridoxal 5'-phosphate. At Lys206 the chain carries N6-(pyridoxal phosphate)lysine. A pyridoxal 5'-phosphate-binding site is contributed by Thr243. Cys328 serves as the catalytic Cysteine persulfide intermediate. A [2Fe-2S] cluster-binding site is contributed by Cys328.

This sequence belongs to the class-V pyridoxal-phosphate-dependent aminotransferase family. NifS/IscS subfamily. In terms of assembly, homodimer. Forms a heterotetramer with IscU, interacts with other sulfur acceptors. It depends on pyridoxal 5'-phosphate as a cofactor.

The protein resides in the cytoplasm. It carries out the reaction (sulfur carrier)-H + L-cysteine = (sulfur carrier)-SH + L-alanine. The protein operates within cofactor biosynthesis; iron-sulfur cluster biosynthesis. Functionally, master enzyme that delivers sulfur to a number of partners involved in Fe-S cluster assembly, tRNA modification or cofactor biosynthesis. Catalyzes the removal of elemental sulfur atoms from cysteine to produce alanine. Functions as a sulfur delivery protein for Fe-S cluster synthesis onto IscU, an Fe-S scaffold assembly protein, as well as other S acceptor proteins. This is Cysteine desulfurase IscS from Edwardsiella ictaluri (strain 93-146).